A 440-amino-acid polypeptide reads, in one-letter code: tRNA(Ile)-lysidine synthase (440 aa).

25–30 (SGGVDS) serves as a coordination point for ATP.

It belongs to the tRNA(Ile)-lysidine synthase family.

The protein localises to the cytoplasm. It carries out the reaction cytidine(34) in tRNA(Ile2) + L-lysine + ATP = lysidine(34) in tRNA(Ile2) + AMP + diphosphate + H(+). Ligates lysine onto the cytidine present at position 34 of the AUA codon-specific tRNA(Ile) that contains the anticodon CAU, in an ATP-dependent manner. Cytidine is converted to lysidine, thus changing the amino acid specificity of the tRNA from methionine to isoleucine. The protein is tRNA(Ile)-lysidine synthase of Vibrio cholerae serotype O1 (strain ATCC 39315 / El Tor Inaba N16961).